The chain runs to 419 residues: Putative nucleobase-ascorbate transporter 9 (419 aa).

Residues methionine 1–glycine 22 are compositionally biased toward gly residues. Positions methionine 1 to glutamate 28 are disordered. The next 10 membrane-spanning stretches (helical) occupy residues leucine 64–glycine 84, valine 91–threonine 111, leucine 113–serine 133, isoleucine 153–tryptophan 173, serine 184–valine 204, glycine 220–valine 240, serine 273–alanine 293, arginine 313–alanine 333, phenylalanine 334–valine 354, and phenylalanine 370–phenylalanine 390.

Belongs to the nucleobase:cation symporter-2 (NCS2) (TC 2.A.40) family.

It localises to the membrane. The polypeptide is Putative nucleobase-ascorbate transporter 9 (NAT9) (Arabidopsis thaliana (Mouse-ear cress)).